The chain runs to 212 residues: ATP phosphoribosyltransferase 2 (212 aa).

Belongs to the ATP phosphoribosyltransferase family. Short subfamily. In terms of assembly, heteromultimer composed of HisG and HisZ subunits.

It is found in the cytoplasm. The catalysed reaction is 1-(5-phospho-beta-D-ribosyl)-ATP + diphosphate = 5-phospho-alpha-D-ribose 1-diphosphate + ATP. Its pathway is amino-acid biosynthesis; L-histidine biosynthesis; L-histidine from 5-phospho-alpha-D-ribose 1-diphosphate: step 1/9. Its function is as follows. Catalyzes the condensation of ATP and 5-phosphoribose 1-diphosphate to form N'-(5'-phosphoribosyl)-ATP (PR-ATP). Has a crucial role in the pathway because the rate of histidine biosynthesis seems to be controlled primarily by regulation of HisG enzymatic activity. This Geobacter sulfurreducens (strain ATCC 51573 / DSM 12127 / PCA) protein is ATP phosphoribosyltransferase 2 (hisG2).